The sequence spans 339 residues: Anthranilate phosphoribosyltransferase (339 aa).

Residues G79, 82–83 (GD), S87, 89–92 (NIST), 107–115 (KHGNRSISS), and S119 each bind 5-phospho-alpha-D-ribose 1-diphosphate. G79 serves as a coordination point for anthranilate. S91 lines the Mg(2+) pocket. Residue N110 participates in anthranilate binding. R165 is an anthranilate binding site. Mg(2+) contacts are provided by D224 and E225.

This sequence belongs to the anthranilate phosphoribosyltransferase family. As to quaternary structure, homodimer. Requires Mg(2+) as cofactor.

It catalyses the reaction N-(5-phospho-beta-D-ribosyl)anthranilate + diphosphate = 5-phospho-alpha-D-ribose 1-diphosphate + anthranilate. Its pathway is amino-acid biosynthesis; L-tryptophan biosynthesis; L-tryptophan from chorismate: step 2/5. Functionally, catalyzes the transfer of the phosphoribosyl group of 5-phosphorylribose-1-pyrophosphate (PRPP) to anthranilate to yield N-(5'-phosphoribosyl)-anthranilate (PRA). This Listeria monocytogenes serotype 4a (strain HCC23) protein is Anthranilate phosphoribosyltransferase.